The sequence spans 1007 residues: Integrator complex subunit 8 (1007 aa).

Residues 19 to 24 (WFEFLL) carry the WFEF motif motif. Residues 56–78 (TAQESVGTPGSDLQNLNQTPSNS) are compositionally biased toward polar residues. The disordered stretch occupies residues 56 to 112 (TAQESVGTPGSDLQNLNQTPSNSGPIPGVVGGAPAPTTPTASGGVGMPHSPQRPAEK). A compositionally biased stretch (low complexity) spans 79-97 (GPIPGVVGGAPAPTTPTAS).

The protein belongs to the Integrator subunit 8 family. As to quaternary structure, belongs to the multiprotein complex Integrator, at least composed of IntS1, IntS2, IntS3, IntS4, omd/IntS5, IntS6, defl/IntS7, IntS8, IntS9, IntS10, IntS11, IntS12, asun/IntS13, IntS14 and IntS15. The core complex associates with protein phosphatase 2A subunits mts/PP2A and Pp2A-29B, to form the Integrator-PP2A (INTAC) complex.

It is found in the nucleus. Its subcellular location is the chromosome. In terms of biological role, component of the integrator complex, a multiprotein complex that terminates RNA polymerase II (Pol II) transcription in the promoter-proximal region of genes. The integrator complex provides a quality checkpoint during transcription elongation by driving premature transcription termination of transcripts that are unfavorably configured for transcriptional elongation: the complex terminates transcription by (1) catalyzing dephosphorylation of the C-terminal domain (CTD) of Pol II subunit Polr2A/Rbp1 and Spt5, and (2) degrading the exiting nascent RNA transcript via endonuclease activity. The integrator complex is also involved in the 3'-end processing of the U7 snRNA, and also the spliceosomal snRNAs U1, U2, U4 and U5. Within the integrator complex, INTS8 is required for the recruitment of protein phosphatase 2A (PP2A) to transcription pause-release checkpoint. In Drosophila melanogaster (Fruit fly), this protein is Integrator complex subunit 8.